The sequence spans 514 residues: MDRRKKPLDVAASSLVDLKAELFRKQEEFKKEKLLKDAGIFAKPKPSNKKPSIWTKQNTGVAKRAEKDIEQKAEEDQTLDQSRKKLEEKAKLYEKMTKGDFPDEETEDLYLVDFTQKIIDKQREVQELYQNEAAIKTLEKETDDEEIEPEMEIPPPEDPDEEWVDYVDSLGRSRRCMKKDLPSILKMDQELQGKRLDPDGNTLLSEDMKRELQRQQWEKEEEEALRKPMGPIHYEDIRENEARQLGVGYFAFSRDQDLRHKQRATLDMLREQTLDQRTKREQLKEKRKAALESRLSKLRARKVKKLREEGLEEEAERLENGEVKDTTSPVEAEPEVPRPSRKVEVVIQERRDTKPGVPYVREWDKGKELMFGQWSKKQEELRDERDPEFAPPSDYFMGQKKDDGYSSQNLNSPETSPGKTEPEISENQKKLSVQASTHRAEVVPPSVQAYSNNVQGGLAPAEASGSDAEDGSTSAETDSSDEQDGVPSAHPLHLWCSDTCQPSNAGLWLWPLRI.

Disordered stretches follow at residues 42–83 (AKPK…DQSR) and 137–162 (TLEKETDDEEIEPEMEIPPPEDPDEE). The segment covering 63 to 83 (KRAEKDIEQKAEEDQTLDQSR) has biased composition (basic and acidic residues). Residues 66 to 98 (EKDIEQKAEEDQTLDQSRKKLEEKAKLYEKMTK) are a coiled coil. Residues 141–162 (ETDDEEIEPEMEIPPPEDPDEE) are compositionally biased toward acidic residues. 2 coiled-coil regions span residues 203-227 (LLSEDMKRELQRQQWEKEEEEALRK) and 266-321 (LDML…LENG). 2 disordered regions span residues 270–291 (REQTLDQRTKREQLKEKRKAAL) and 306–490 (LREE…PSAH). 2 stretches are compositionally biased toward basic and acidic residues: residues 335–354 (EVPRPSRKVEVVIQERRDTK) and 376–388 (KKQEELRDERDPE). Positions 405–418 (YSSQNLNSPETSPG) are enriched in polar residues. Basic and acidic residues predominate over residues 420 to 429 (TEPEISENQK).

It localises to the nucleus. Functionally, probably involved in neuronal development. In Gallus gallus (Chicken), this protein is Coiled-coil domain-containing protein 174 (CCDC174).